Consider the following 448-residue polypeptide: DEAD-box ATP-dependent RNA helicase CshB (448 aa).

Positions 4–32 match the Q motif motif; the sequence is HPFEQFNLESSLIDAVKDLNFEKPTEIQN. Positions 35-206 constitute a Helicase ATP-binding domain; it reads IPRILKRTNL…NKYLSHPEYV (172 aa). 48–55 contacts ATP; it reads SQTGTGKS. The short motif at 154 to 157 is the DEAD box element; the sequence is DEAD. The 151-residue stretch at 236-386 folds into the Helicase C-terminal domain; the sequence is NLIDILNPYL…EVKAHNQRQA (151 aa). Over residues 400–418 the composition is skewed to basic residues; that stretch reads NKVRSKIKNKVKPGYKKKF. The disordered stretch occupies residues 400-448; that stretch reads NKVRSKIKNKVKPGYKKKFKQEVEKMKRQERKQFSKQQNRQKRKQNKKG. The segment covering 419-432 has biased composition (basic and acidic residues); the sequence is KQEVEKMKRQERKQ. Residues 438-448 show a composition bias toward basic residues; it reads NRQKRKQNKKG.

It belongs to the DEAD box helicase family. CshB subfamily.

The protein resides in the cytoplasm. The catalysed reaction is ATP + H2O = ADP + phosphate + H(+). Its function is as follows. Probable DEAD-box RNA helicase. May work in conjunction with the cold shock proteins to ensure proper initiation of transcription at low and optimal temperatures. The sequence is that of DEAD-box ATP-dependent RNA helicase CshB from Staphylococcus aureus (strain NCTC 8325 / PS 47).